A 173-amino-acid polypeptide reads, in one-letter code: GTP-dependent dephospho-CoA kinase (173 aa).

Asp-52, Val-53, Val-54, Asp-71, Lys-73, and Asp-122 together coordinate GTP.

Belongs to the GTP-dependent DPCK family.

It catalyses the reaction 3'-dephospho-CoA + GTP = GDP + CoA + H(+). Its pathway is cofactor biosynthesis; coenzyme A biosynthesis. Its function is as follows. Catalyzes the GTP-dependent phosphorylation of the 3'-hydroxyl group of dephosphocoenzyme A to form coenzyme A (CoA). The polypeptide is GTP-dependent dephospho-CoA kinase (Metallosphaera sedula (strain ATCC 51363 / DSM 5348 / JCM 9185 / NBRC 15509 / TH2)).